The chain runs to 98 residues: Large ribosomal subunit protein uL23 (98 aa).

This sequence belongs to the universal ribosomal protein uL23 family. As to quaternary structure, part of the 50S ribosomal subunit. Contacts protein L29, and trigger factor when it is bound to the ribosome.

Its function is as follows. One of the early assembly proteins it binds 23S rRNA. One of the proteins that surrounds the polypeptide exit tunnel on the outside of the ribosome. Forms the main docking site for trigger factor binding to the ribosome. This Acidothermus cellulolyticus (strain ATCC 43068 / DSM 8971 / 11B) protein is Large ribosomal subunit protein uL23.